The following is a 965-amino-acid chain: Probable ion channel POLLUX (965 aa).

Positions 1–11 (MAESDGGEASP) are enriched in low complexity. 2 disordered regions span residues 1-76 (MAES…APRG) and 108-158 (GPHA…KSLA). Residues 32–42 (LTKSRTISGSA) are compositionally biased toward polar residues. Composition is skewed to low complexity over residues 52–66 (SNSS…SSTA) and 118–149 (RSQQ…ASVS). Transmembrane regions (helical) follow at residues 187–207 (LSPY…LAIW), 251–271 (ADWN…VFLV), 317–337 (LALL…LYVV), and 369–389 (IVSV…LGLV). 2 consecutive RCK N-terminal domains span residues 410 to 551 (VNHI…ETVV) and 670 to 818 (PEKI…DKSI).

The protein belongs to the castor/pollux (TC 1.A.1.23) family. In terms of tissue distribution, expressed in roots, leaves, stems and panicles.

Its subcellular location is the nucleus membrane. Functionally, required for mycorrhizal symbiosis. The protein is Probable ion channel POLLUX of Oryza sativa subsp. japonica (Rice).